Reading from the N-terminus, the 682-residue chain is Methionine--tRNA ligase (682 aa).

Positions 15–25 (PYANGAIHLGH) match the 'HIGH' region motif. The Zn(2+) site is built by C146, C149, C159, and C162. Positions 331–335 (KMSKS) match the 'KMSKS' region motif. K334 is a binding site for ATP. Positions 580-682 (DLAKLDMRVA…NGVTAGMQVK (103 aa)) constitute a tRNA-binding domain.

It belongs to the class-I aminoacyl-tRNA synthetase family. MetG type 1 subfamily. In terms of assembly, homodimer. Requires Zn(2+) as cofactor.

It is found in the cytoplasm. It catalyses the reaction tRNA(Met) + L-methionine + ATP = L-methionyl-tRNA(Met) + AMP + diphosphate. Is required not only for elongation of protein synthesis but also for the initiation of all mRNA translation through initiator tRNA(fMet) aminoacylation. This chain is Methionine--tRNA ligase, found in Haemophilus influenzae (strain 86-028NP).